The sequence spans 501 residues: MPSANASRRSQEKPREIMDAAEDYAKERYGVSSMIQSQEKPDRVLVRISDLTVQKAGEVVWVRARVHTSRAKGKQCFLVLRQQQFNVQALVAVGDHASKQMVKFAANINKESIVDVEGVVRKVNQKIGSCTQQDVELHVQKIYVISSAEPRLPLQLDDAVRPEVEGEEEGRATVNQDTRLDNRVIDLRTSTSQAIFRLQSGICHPFRETLTNKGFVEIQTPKIISAASEGGANVFTVSYFKNNAYLAQSPQLYKQMCICADFEKVFCIGPVFRAEDSNTHRHLTEFVGLDIEMAFNYHYHEVVEEIADTLVQIFKGLQKRFQTEIQTVNKQFPCEPFKFLEPTLRLEYCEALAMLREAGIEMGDEEDLSTPNEKLLGRLVKEKYDTDFYILDKYPLAVRPFYTMPDPRNPKQSNSYDMFMRGEEILSGAQRIHDPQLVTERALHHGIDLEKIKAYIDSFRFGAPPHAGGGIGLERVTMLFLGLHNVRQTSMFPRDPKRLTP.

Phosphothreonine is present on threonine 52. N6-acetyllysine is present on lysine 74. Glutamate 229 is a binding site for L-aspartate. Serine 249 carries the post-translational modification Phosphoserine. Residues 251–254 (QLYK) are aspartate. Arginine 273 contacts L-aspartate. ATP is bound by residues 273–275 (RAE) and 281–283 (RHL). An N6-acetyllysine modification is found at lysine 374. A binding site for the 3'-end of tRNA region spans residues 411–415 (KQSNS). Glutamate 424 is a binding site for ATP. Positions 427 and 431 each coordinate L-aspartate. Residue 472-475 (GLER) coordinates ATP. A Phosphothreonine; by PKA modification is found at threonine 500.

It belongs to the class-II aminoacyl-tRNA synthetase family. Type 2 subfamily. In terms of assembly, homodimer. Part of a multisubunit complex that groups tRNA ligases for Arg (RARS1), Asp (DARS1), Gln (QARS1), Ile (IARS1), Leu (LARS1), Lys (KARS1), Met (MARS1) the bifunctional ligase for Glu and Pro (EPRS1) and the auxiliary subunits AIMP1/p43, AIMP2/p38 and EEF1E1/p18.

It localises to the cytoplasm. The catalysed reaction is tRNA(Asp) + L-aspartate + ATP = L-aspartyl-tRNA(Asp) + AMP + diphosphate. Its function is as follows. Catalyzes the specific attachment of an amino acid to its cognate tRNA in a 2 step reaction: the amino acid (AA) is first activated by ATP to form AA-AMP and then transferred to the acceptor end of the tRNA. This chain is Aspartate--tRNA ligase, cytoplasmic (DARS1), found in Bos taurus (Bovine).